The chain runs to 129 residues: uncharacterized protein (129 aa).

The segment covering 91–114 (ASEKVGEMKEAASEKASEMKEAVS) has biased composition (basic and acidic residues). Residues 91–129 (ASEKVGEMKEAASEKASEMKEAVSEKATQAVDAVKEATK) form a disordered region.

This sequence belongs to the LEA type 1 family.

This is an uncharacterized protein from Haemophilus influenzae (strain ATCC 51907 / DSM 11121 / KW20 / Rd).